The sequence spans 242 residues: Proteasome subunit alpha (242 aa).

It belongs to the peptidase T1A family. In terms of assembly, the 20S proteasome core is composed of 14 alpha and 14 beta subunits that assemble into four stacked heptameric rings, resulting in a barrel-shaped structure. The two inner rings, each composed of seven catalytic beta subunits, are sandwiched by two outer rings, each composed of seven alpha subunits. The catalytic chamber with the active sites is on the inside of the barrel. Has a gated structure, the ends of the cylinder being occluded by the N-termini of the alpha-subunits. Is capped at one or both ends by the proteasome regulatory ATPase, PAN.

The protein resides in the cytoplasm. With respect to regulation, the formation of the proteasomal ATPase PAN-20S proteasome complex, via the docking of the C-termini of PAN into the intersubunit pockets in the alpha-rings, triggers opening of the gate for substrate entry. Interconversion between the open-gate and close-gate conformations leads to a dynamic regulation of the 20S proteasome proteolysis activity. Its function is as follows. Component of the proteasome core, a large protease complex with broad specificity involved in protein degradation. The sequence is that of Proteasome subunit alpha from Sulfolobus acidocaldarius (strain ATCC 33909 / DSM 639 / JCM 8929 / NBRC 15157 / NCIMB 11770).